The following is a 313-amino-acid chain: 4-hydroxy-3-methylbut-2-enyl diphosphate reductase (313 aa).

Cysteine 12 lines the [4Fe-4S] cluster pocket. Residues histidine 41 and histidine 74 each coordinate (2E)-4-hydroxy-3-methylbut-2-enyl diphosphate. Dimethylallyl diphosphate contacts are provided by histidine 41 and histidine 74. Isopentenyl diphosphate is bound by residues histidine 41 and histidine 74. Cysteine 96 contacts [4Fe-4S] cluster. Histidine 124 serves as a coordination point for (2E)-4-hydroxy-3-methylbut-2-enyl diphosphate. Histidine 124 serves as a coordination point for dimethylallyl diphosphate. Histidine 124 is an isopentenyl diphosphate binding site. Glutamate 126 (proton donor) is an active-site residue. Threonine 167 contacts (2E)-4-hydroxy-3-methylbut-2-enyl diphosphate. Cysteine 197 is a [4Fe-4S] cluster binding site. 4 residues coordinate (2E)-4-hydroxy-3-methylbut-2-enyl diphosphate: serine 225, serine 226, asparagine 227, and serine 269. The dimethylallyl diphosphate site is built by serine 225, serine 226, asparagine 227, and serine 269. Isopentenyl diphosphate-binding residues include serine 225, serine 226, asparagine 227, and serine 269.

This sequence belongs to the IspH family. [4Fe-4S] cluster is required as a cofactor.

The catalysed reaction is isopentenyl diphosphate + 2 oxidized [2Fe-2S]-[ferredoxin] + H2O = (2E)-4-hydroxy-3-methylbut-2-enyl diphosphate + 2 reduced [2Fe-2S]-[ferredoxin] + 2 H(+). It carries out the reaction dimethylallyl diphosphate + 2 oxidized [2Fe-2S]-[ferredoxin] + H2O = (2E)-4-hydroxy-3-methylbut-2-enyl diphosphate + 2 reduced [2Fe-2S]-[ferredoxin] + 2 H(+). It participates in isoprenoid biosynthesis; dimethylallyl diphosphate biosynthesis; dimethylallyl diphosphate from (2E)-4-hydroxy-3-methylbutenyl diphosphate: step 1/1. The protein operates within isoprenoid biosynthesis; isopentenyl diphosphate biosynthesis via DXP pathway; isopentenyl diphosphate from 1-deoxy-D-xylulose 5-phosphate: step 6/6. In terms of biological role, catalyzes the conversion of 1-hydroxy-2-methyl-2-(E)-butenyl 4-diphosphate (HMBPP) into a mixture of isopentenyl diphosphate (IPP) and dimethylallyl diphosphate (DMAPP). Acts in the terminal step of the DOXP/MEP pathway for isoprenoid precursor biosynthesis. The polypeptide is 4-hydroxy-3-methylbut-2-enyl diphosphate reductase (Methylococcus capsulatus (strain ATCC 33009 / NCIMB 11132 / Bath)).